A 353-amino-acid chain; its full sequence is Alcohol dehydrogenase 1 (353 aa).

The Zn(2+) site is built by C47, H70, C101, C104, C107, C115, and C157. NAD(+) is bound by residues 181–187 (GAGGGLG), D205, K210, 274–276 (IGL), and R346.

The protein belongs to the zinc-containing alcohol dehydrogenase family. As to quaternary structure, homotetramer. Requires Zn(2+) as cofactor.

It localises to the cytoplasm. The enzyme catalyses a primary alcohol + NAD(+) = an aldehyde + NADH + H(+). It carries out the reaction a secondary alcohol + NAD(+) = a ketone + NADH + H(+). The polypeptide is Alcohol dehydrogenase 1 (adh-1) (Neurospora crassa (strain ATCC 24698 / 74-OR23-1A / CBS 708.71 / DSM 1257 / FGSC 987)).